The sequence spans 439 residues: Ribosomal protein uS12 methylthiotransferase RimO (439 aa).

The region spanning 5 to 115 (PRISFTSLGC…VLDAVHRALP (111 aa)) is the MTTase N-terminal domain. [4Fe-4S] cluster-binding residues include Cys14, Cys50, Cys79, Cys146, Cys150, and Cys153. In terms of domain architecture, Radical SAM core spans 132–369 (LTPRHYAYLK…MARQQKISAR (238 aa)). The region spanning 372-438 (KRKVGTRQQI…QYDLHGSVAG (67 aa)) is the TRAM domain.

The protein belongs to the methylthiotransferase family. RimO subfamily. [4Fe-4S] cluster is required as a cofactor.

It localises to the cytoplasm. The catalysed reaction is L-aspartate(89)-[ribosomal protein uS12]-hydrogen + (sulfur carrier)-SH + AH2 + 2 S-adenosyl-L-methionine = 3-methylsulfanyl-L-aspartate(89)-[ribosomal protein uS12]-hydrogen + (sulfur carrier)-H + 5'-deoxyadenosine + L-methionine + A + S-adenosyl-L-homocysteine + 2 H(+). Functionally, catalyzes the methylthiolation of an aspartic acid residue of ribosomal protein uS12. The protein is Ribosomal protein uS12 methylthiotransferase RimO of Bradyrhizobium diazoefficiens (strain JCM 10833 / BCRC 13528 / IAM 13628 / NBRC 14792 / USDA 110).